Here is a 148-residue protein sequence, read N- to C-terminus: D-aminoacyl-tRNA deacylase (148 aa).

Positions 136–137 (GP) match the Gly-cisPro motif, important for rejection of L-amino acids motif.

The protein belongs to the DTD family. In terms of assembly, homodimer.

It is found in the cytoplasm. It carries out the reaction glycyl-tRNA(Ala) + H2O = tRNA(Ala) + glycine + H(+). The enzyme catalyses a D-aminoacyl-tRNA + H2O = a tRNA + a D-alpha-amino acid + H(+). Its function is as follows. An aminoacyl-tRNA editing enzyme that deacylates mischarged D-aminoacyl-tRNAs. Also deacylates mischarged glycyl-tRNA(Ala), protecting cells against glycine mischarging by AlaRS. Acts via tRNA-based rather than protein-based catalysis; rejects L-amino acids rather than detecting D-amino acids in the active site. By recycling D-aminoacyl-tRNA to D-amino acids and free tRNA molecules, this enzyme counteracts the toxicity associated with the formation of D-aminoacyl-tRNA entities in vivo and helps enforce protein L-homochirality. The chain is D-aminoacyl-tRNA deacylase from Streptococcus mutans serotype c (strain ATCC 700610 / UA159).